The primary structure comprises 123 residues: DNA-directed RNA polymerase I subunit RPA12 (123 aa).

Zn(2+) is bound by residues C17, C20, C35, C38, C84, and C87. The segment at 17–38 (CPDCGSVLPLPGVQDTVICPRC) adopts a C4-type zinc-finger fold. Residues 80 to 120 (VDRRCSRCGHEGMAYYTRQMRSADEGQTVFYTCINCKFQEK) form a TFIIS-type zinc finger. The Hairpin motif lies at 103 to 104 (DE). Zn(2+) contacts are provided by C112 and C115.

The protein belongs to the archaeal RpoM/eukaryotic RPA12/RPB9/RPC11 RNA polymerase family. As to quaternary structure, component of the RNA polymerase I (Pol I) complex consisting of 13 subunits: a ten-subunit catalytic core composed of POLR1A/RPA1, POLR1B/RPA2, POLR1C/RPAC1, POLR1D/RPAC2, POLR1H/RPA12, POLR2E/RPABC1, POLR2F/RPABC2, POLR2H/RPABC3, POLR2K/RPABC4 and POLR2L/RPABC5; a mobile stalk subunit POLR1F/RPA43 protruding from the core and additional subunits homologous to general transcription factors POLR1E/RPA49 and POLR1G/RPA34. Part of Pol I pre-initiation complex (PIC), in which Pol I core assembles with RRN3 and promoter-bound UTBF and SL1/TIF-IB complex.

It is found in the nucleus. It localises to the nucleolus. In terms of biological role, core component of RNA polymerase I (Pol I), a DNA-dependent RNA polymerase which synthesizes ribosomal RNA precursors using the four ribonucleoside triphosphates as substrates. Can mediate Pol I proofreading of the nascent RNA transcript. Anchors into the Pol I active site to monitor transcription fidelity and cleave mis-incorporated 5'-ribonucleotides. The sequence is that of DNA-directed RNA polymerase I subunit RPA12 from Rattus norvegicus (Rat).